A 240-amino-acid chain; its full sequence is PF03932 family protein CutC (240 aa).

It belongs to the CutC family.

The protein resides in the cytoplasm. The protein is PF03932 family protein CutC of Xanthomonas axonopodis pv. citri (strain 306).